The following is a 158-amino-acid chain: MQGRLSAWLVKHGLIHRSLGFDYQGIETLQIKSEDWHSIAVILYVYGYNYLRSQCAYDVAPGGLLASVYHLTRIEYGVDQPEEVCIKVFVSRRNPRIPSVFWVWKSVDFQERESYDMLGISYDNHPRLKRILMPESWIGWPLRKDYVAPNFYEIQDAH.

The protein belongs to the complex I 30 kDa subunit family. As to quaternary structure, NDH is composed of at least 16 different subunits, 5 of which are encoded in the nucleus.

Its subcellular location is the plastid. It is found in the chloroplast thylakoid membrane. It catalyses the reaction a plastoquinone + NADH + (n+1) H(+)(in) = a plastoquinol + NAD(+) + n H(+)(out). It carries out the reaction a plastoquinone + NADPH + (n+1) H(+)(in) = a plastoquinol + NADP(+) + n H(+)(out). Its function is as follows. NDH shuttles electrons from NAD(P)H:plastoquinone, via FMN and iron-sulfur (Fe-S) centers, to quinones in the photosynthetic chain and possibly in a chloroplast respiratory chain. The immediate electron acceptor for the enzyme in this species is believed to be plastoquinone. Couples the redox reaction to proton translocation, and thus conserves the redox energy in a proton gradient. This Coffea arabica (Arabian coffee) protein is NAD(P)H-quinone oxidoreductase subunit J, chloroplastic.